A 237-amino-acid chain; its full sequence is Ribonuclease PH (237 aa).

Phosphate is bound by residues R86 and 124-126 (GTR).

This sequence belongs to the RNase PH family. In terms of assembly, homohexameric ring arranged as a trimer of dimers.

The enzyme catalyses tRNA(n+1) + phosphate = tRNA(n) + a ribonucleoside 5'-diphosphate. Functionally, phosphorolytic 3'-5' exoribonuclease that plays an important role in tRNA 3'-end maturation. Removes nucleotide residues following the 3'-CCA terminus of tRNAs; can also add nucleotides to the ends of RNA molecules by using nucleoside diphosphates as substrates, but this may not be physiologically important. Probably plays a role in initiation of 16S rRNA degradation (leading to ribosome degradation) during starvation. The protein is Ribonuclease PH of Zymomonas mobilis subsp. mobilis (strain ATCC 31821 / ZM4 / CP4).